We begin with the raw amino-acid sequence, 969 residues long: Alpha-glucosidase (969 aa).

The signal sequence occupies residues 1 to 24 (MMISTAYQSLFLTALFSAISIAVG). N-linked (GlcNAc...) asparagine glycans are attached at residues Asn37, Asn67, Asn99, Asn116, Asn139, Asn146, Asn209, Asn245, Asn249, Asn331, Asn406, Asn429, Asn462, and Asn470. The Nucleophile role is filled by Asp481. Glu484 is a catalytic residue. Residues Asn520, Asn523, and Asn589 are each glycosylated (N-linked (GlcNAc...) asparagine). Asp647 serves as the catalytic Proton donor. N-linked (GlcNAc...) asparagine glycosylation is found at Asn648, Asn801, Asn810, Asn821, Asn885, Asn915, Asn934, Asn942, Asn954, and Asn966.

It belongs to the glycosyl hydrolase 31 family.

It is found in the secreted. The catalysed reaction is Hydrolysis of terminal, non-reducing (1-&gt;4)-linked alpha-D-glucose residues with release of alpha-D-glucose.. In terms of biological role, hydrolyzes malto-oligosaccharides, but has a low activity toward soluble starch. The protein is Alpha-glucosidase (agl1) of Schizosaccharomyces pombe (strain 972 / ATCC 24843) (Fission yeast).